We begin with the raw amino-acid sequence, 81 residues long: Large ribosomal subunit protein bL31B (81 aa).

This sequence belongs to the bacterial ribosomal protein bL31 family. Type B subfamily. In terms of assembly, part of the 50S ribosomal subunit.

In Listeria innocua serovar 6a (strain ATCC BAA-680 / CLIP 11262), this protein is Large ribosomal subunit protein bL31B.